The primary structure comprises 39 residues: Photosystem II reaction center protein L (39 aa).

The chain crosses the membrane as a helical span at residues 18-38 (SLYWGLLLIFVLAVLFSNYFF).

Belongs to the PsbL family. As to quaternary structure, PSII is composed of 1 copy each of membrane proteins PsbA, PsbB, PsbC, PsbD, PsbE, PsbF, PsbH, PsbI, PsbJ, PsbK, PsbL, PsbM, PsbT, PsbX, PsbY, PsbZ, Psb30/Ycf12, at least 3 peripheral proteins of the oxygen-evolving complex and a large number of cofactors. It forms dimeric complexes.

It localises to the plastid thylakoid membrane. In terms of biological role, one of the components of the core complex of photosystem II (PSII). PSII is a light-driven water:plastoquinone oxidoreductase that uses light energy to abstract electrons from H(2)O, generating O(2) and a proton gradient subsequently used for ATP formation. It consists of a core antenna complex that captures photons, and an electron transfer chain that converts photonic excitation into a charge separation. This subunit is found at the monomer-monomer interface and is required for correct PSII assembly and/or dimerization. This Cuscuta gronovii (Common dodder) protein is Photosystem II reaction center protein L.